Reading from the N-terminus, the 166-residue chain is Vasopressin-neurophysin 2-copeptin (166 aa).

Positions 1–19 (MPDATLPACFLGLLALTSA) are cleaved as a signal peptide. Cys-20 and Cys-25 are disulfide-bonded. At Gly-28 the chain carries Glycine amide. 7 disulfides stabilise this stretch: Cys-41–Cys-85, Cys-44–Cys-58, Cys-52–Cys-75, Cys-59–Cys-65, Cys-92–Cys-104, Cys-98–Cys-116, and Cys-105–Cys-110. Asn-133 carries an N-linked (GlcNAc...) asparagine glycan.

It belongs to the vasopressin/oxytocin family. As to quaternary structure, interacts with vasopressin receptors V1bR/AVPR1B (Ki=85 pM), V1aR/AVPR1A (Ki=0.6 nM) and V2R/AVPR2 (Ki=4.9 nM). Interacts with oxytocin receptor (OXTR) (Ki=110 nM). In terms of processing, a shorter neurophysin molecule (32-123) is called neurophysin-I and is derived from the complete protein (called neurophysin III) by proteolytic degradation (in vivo or after extraction).

The protein resides in the secreted. Neurophysin 2 specifically binds vasopressin. In terms of biological role, vasopressin has a direct antidiuretic action on the kidney, it also causes vasoconstriction of the peripheral vessels. Acts by binding to vasopressin receptors (V1bR/AVPR1B, V1aR/AVPR1A, and V2R/AVPR2). The sequence is that of Vasopressin-neurophysin 2-copeptin (AVP) from Sus scrofa (Pig).